The sequence spans 116 residues: Small ribosomal subunit protein bS6 (116 aa).

Residues 94 to 116 (ESITEPSPLTKPKEDRKGDSEAA) are disordered. Positions 104-116 (KPKEDRKGDSEAA) are enriched in basic and acidic residues.

The protein belongs to the bacterial ribosomal protein bS6 family.

Functionally, binds together with bS18 to 16S ribosomal RNA. This is Small ribosomal subunit protein bS6 from Idiomarina loihiensis (strain ATCC BAA-735 / DSM 15497 / L2-TR).